Reading from the N-terminus, the 366-residue chain is Peptide chain release factor 1 (366 aa).

An N5-methylglutamine modification is found at Gln-230. Composition is skewed to basic and acidic residues over residues Ala-283–Ala-293 and Val-315–Pro-328. Residues Ala-283 to Gly-335 are disordered.

It belongs to the prokaryotic/mitochondrial release factor family. In terms of processing, methylated by PrmC. Methylation increases the termination efficiency of RF1.

It is found in the cytoplasm. Functionally, peptide chain release factor 1 directs the termination of translation in response to the peptide chain termination codons UAG and UAA. This is Peptide chain release factor 1 from Deinococcus deserti (strain DSM 17065 / CIP 109153 / LMG 22923 / VCD115).